Reading from the N-terminus, the 448-residue chain is Doublesex- and mab-3-related transcription factor A2 (448 aa).

Residues C57 to R104 constitute a DNA-binding region (DM). The span at S166 to D187 shows a compositional bias: polar residues. Residues S166–M259 are disordered. Residues G229–G239 are compositionally biased toward low complexity. One can recognise a DMA domain in the interval M259–Q294.

Belongs to the DMRT family.

The protein localises to the nucleus. May be involved in sexual development. The chain is Doublesex- and mab-3-related transcription factor A2 (dmrta2) from Monopterus albus (Swamp eel).